Consider the following 346-residue polypeptide: Cell division protein FtsZ 2 (346 aa).

GTP-binding positions include 23 to 27, 110 to 112, Glu-141, Arg-145, and Asp-189; these read GGGGN and GTG. A disordered region spans residues 320–346; sequence SNRSAQPTAPEAMNGQTAAAVPSRTLQ.

The protein belongs to the FtsZ family. As to quaternary structure, homodimer. Polymerizes to form a dynamic ring structure in a strictly GTP-dependent manner. Interacts directly with several other division proteins.

The protein resides in the cytoplasm. Its function is as follows. Essential cell division protein that forms a contractile ring structure (Z ring) at the future cell division site. The regulation of the ring assembly controls the timing and the location of cell division. One of the functions of the FtsZ ring is to recruit other cell division proteins to the septum to produce a new cell wall between the dividing cells. Binds GTP and shows GTPase activity. The chain is Cell division protein FtsZ 2 from Rhizobium meliloti (strain 1021) (Ensifer meliloti).